A 105-amino-acid polypeptide reads, in one-letter code: MISVDFSKGLVPTIILDDQNGDVLMLAYMNEESYQKTLETGYTWFFSRSRNELWNKGATSGHTQKVKQIWTDCDNDTLLIRVTQIGPACHTGKKSCFFNLIKEDF.

D72 contacts Mg(2+). C73 provides a ligand contact to Zn(2+). Mg(2+) contacts are provided by D74 and D76. Zn(2+) contacts are provided by C89 and C96.

It belongs to the PRA-CH family. As to quaternary structure, homodimer. Mg(2+) serves as cofactor. Requires Zn(2+) as cofactor.

The protein localises to the cytoplasm. It catalyses the reaction 1-(5-phospho-beta-D-ribosyl)-5'-AMP + H2O = 1-(5-phospho-beta-D-ribosyl)-5-[(5-phospho-beta-D-ribosylamino)methylideneamino]imidazole-4-carboxamide. The protein operates within amino-acid biosynthesis; L-histidine biosynthesis; L-histidine from 5-phospho-alpha-D-ribose 1-diphosphate: step 3/9. Functionally, catalyzes the hydrolysis of the adenine ring of phosphoribosyl-AMP. This chain is Phosphoribosyl-AMP cyclohydrolase, found in Listeria monocytogenes serovar 1/2a (strain ATCC BAA-679 / EGD-e).